The chain runs to 466 residues: Phosphomethylpyrimidine synthase (466 aa).

Residues asparagine 80, methionine 109, tyrosine 139, histidine 175, 195 to 197, 236 to 239, and glutamate 275 each bind substrate; these read SRG and DSLR. Residue histidine 279 participates in Zn(2+) binding. Tyrosine 302 is a binding site for substrate. A Zn(2+)-binding site is contributed by histidine 343. Positions 423, 426, and 431 each coordinate [4Fe-4S] cluster.

The protein belongs to the ThiC family. Requires [4Fe-4S] cluster as cofactor.

The catalysed reaction is 5-amino-1-(5-phospho-beta-D-ribosyl)imidazole + S-adenosyl-L-methionine = 4-amino-2-methyl-5-(phosphooxymethyl)pyrimidine + CO + 5'-deoxyadenosine + formate + L-methionine + 3 H(+). It participates in cofactor biosynthesis; thiamine diphosphate biosynthesis. Functionally, catalyzes the synthesis of the hydroxymethylpyrimidine phosphate (HMP-P) moiety of thiamine from aminoimidazole ribotide (AIR) in a radical S-adenosyl-L-methionine (SAM)-dependent reaction. The chain is Phosphomethylpyrimidine synthase from Prochlorococcus marinus (strain NATL2A).